The sequence spans 589 residues: Protein OS-9 homolog (589 aa).

An N-terminal signal peptide occupies residues 1–21 (MFSILNKLGIIWLALANISNC). N-linked (GlcNAc...) asparagine glycosylation is found at Asn-17, Asn-61, and Asn-90. One can recognise an MRH domain in the interval 130-288 (KDCVFAYGSN…VIGVPKLCSL (159 aa)). An intrachain disulfide couples Cys-132 to Cys-148. A mannooligosaccharide derivative-binding residues include Trp-143, Gln-155, Asp-241, Arg-247, Glu-270, and Tyr-276. Disulfide bonds link Cys-240-Cys-274 and Cys-255-Cys-286. N-linked (GlcNAc...) asparagine glycosylation is present at Asn-426. The interval 497-520 (GKGSALDSTNNDKNNKATAENDKQ) is disordered. Positions 509 to 519 (KNNKATAENDK) are enriched in basic and acidic residues. The short motif at 586-589 (HDEL) is the Prevents secretion from ER element.

The protein belongs to the OS-9 family. As to quaternary structure, interacts with missfolded ER lumenal proteins.

The protein resides in the endoplasmic reticulum membrane. Its function is as follows. Lectin involved in the quality control of the secretory pathway. As a member of the endoplasmic reticulum-associated degradation lumenal (ERAD-L) surveillance system, targets misfolded endoplasmic reticulum lumenal glycoproteins for degradation. This chain is Protein OS-9 homolog (YOS9), found in Debaryomyces hansenii (strain ATCC 36239 / CBS 767 / BCRC 21394 / JCM 1990 / NBRC 0083 / IGC 2968) (Yeast).